A 74-amino-acid polypeptide reads, in one-letter code: Guanine nucleotide-binding protein G(T) subunit gamma-T1 (74 aa).

C71 carries the cysteine methyl ester modification. The S-farnesyl cysteine moiety is linked to residue C71. Residues 72-74 (VIS) constitute a propeptide, removed in mature form.

The protein belongs to the G protein gamma family. In terms of assembly, g proteins are composed of 3 units, alpha, beta and gamma. Retinal rod outer segment.

The protein localises to the cell membrane. Guanine nucleotide-binding proteins (G proteins) are involved as a modulator or transducer in various transmembrane signaling systems. The beta and gamma chains are required for the GTPase activity, for replacement of GDP by GTP, and for G protein-effector interaction. The polypeptide is Guanine nucleotide-binding protein G(T) subunit gamma-T1 (GNGT1) (Canis lupus familiaris (Dog)).